The primary structure comprises 417 residues: Adenosylhomocysteinase (417 aa).

Substrate is bound by residues T53, D125, and E149. 150–152 (TTT) is a binding site for NAD(+). Substrate-binding residues include K179 and D183. NAD(+)-binding positions include N184, 213 to 218 (GYGWVG), E236, N271, 292 to 294 (AGH), and N339.

It belongs to the adenosylhomocysteinase family. NAD(+) is required as a cofactor.

The protein resides in the cytoplasm. The catalysed reaction is S-adenosyl-L-homocysteine + H2O = L-homocysteine + adenosine. It functions in the pathway amino-acid biosynthesis; L-homocysteine biosynthesis; L-homocysteine from S-adenosyl-L-homocysteine: step 1/1. In terms of biological role, may play a key role in the regulation of the intracellular concentration of adenosylhomocysteine. The protein is Adenosylhomocysteinase of Saccharolobus solfataricus (strain ATCC 35092 / DSM 1617 / JCM 11322 / P2) (Sulfolobus solfataricus).